The following is a 2294-amino-acid chain: Protein Ycf2 (2294 aa).

1635-1642 (GSIGTGRS) contributes to the ATP binding site.

Belongs to the Ycf2 family.

The protein localises to the plastid. Its subcellular location is the chloroplast stroma. In terms of biological role, probable ATPase of unknown function. Its presence in a non-photosynthetic plant (Epifagus virginiana) and experiments in tobacco indicate that it has an essential function which is probably not related to photosynthesis. This Ranunculus macranthus (Large buttercup) protein is Protein Ycf2.